The chain runs to 638 residues: Chaperone protein DnaK (638 aa).

Position 199 is a phosphothreonine; by autocatalysis (T199). Residues 600–638 are disordered; it reads EINQKKSEENLKKEDTSSESKKDENVVDAEFEEIKDPKK. Positions 602–624 are enriched in basic and acidic residues; it reads NQKKSEENLKKEDTSSESKKDEN.

Belongs to the heat shock protein 70 family.

Its function is as follows. Acts as a chaperone. The protein is Chaperone protein DnaK of Buchnera aphidicola subsp. Schizaphis graminum (strain Sg).